The primary structure comprises 618 residues: Probable Xaa-Pro aminopeptidase P (618 aa).

Mn(2+)-binding residues include aspartate 414, aspartate 425, glutamate 523, and glutamate 537.

Belongs to the peptidase M24B family. Mn(2+) serves as cofactor.

It carries out the reaction Release of any N-terminal amino acid, including proline, that is linked to proline, even from a dipeptide or tripeptide.. In terms of biological role, catalyzes the removal of a penultimate prolyl residue from the N-termini of peptides. This chain is Probable Xaa-Pro aminopeptidase P (AMPP), found in Metarhizium acridum (strain CQMa 102).